Reading from the N-terminus, the 209-residue chain is Large ribosomal subunit protein uL3 (209 aa).

Positions 126 to 165 (HNFGGGSRTHGQSDRLRAPGSVGGSSDPSRTFRGTRMAGR) are disordered.

It belongs to the universal ribosomal protein uL3 family. As to quaternary structure, part of the 50S ribosomal subunit. Forms a cluster with proteins L14 and L19.

One of the primary rRNA binding proteins, it binds directly near the 3'-end of the 23S rRNA, where it nucleates assembly of the 50S subunit. The chain is Large ribosomal subunit protein uL3 from Chlorobium limicola (strain DSM 245 / NBRC 103803 / 6330).